The chain runs to 968 residues: Glycine dehydrogenase (decarboxylating) (968 aa).

At Lys717 the chain carries N6-(pyridoxal phosphate)lysine.

This sequence belongs to the GcvP family. In terms of assembly, the glycine cleavage system is composed of four proteins: P, T, L and H. Requires pyridoxal 5'-phosphate as cofactor.

The catalysed reaction is N(6)-[(R)-lipoyl]-L-lysyl-[glycine-cleavage complex H protein] + glycine + H(+) = N(6)-[(R)-S(8)-aminomethyldihydrolipoyl]-L-lysyl-[glycine-cleavage complex H protein] + CO2. In terms of biological role, the glycine cleavage system catalyzes the degradation of glycine. The P protein binds the alpha-amino group of glycine through its pyridoxal phosphate cofactor; CO(2) is released and the remaining methylamine moiety is then transferred to the lipoamide cofactor of the H protein. This Tropheryma whipplei (strain TW08/27) (Whipple's bacillus) protein is Glycine dehydrogenase (decarboxylating).